Here is a 264-residue protein sequence, read N- to C-terminus: Acid phosphatase (264 aa).

The signal sequence occupies residues 1–28 (MIKVPRFICMIALTSGILASGLSQSVSA).

It belongs to the class A bacterial acid phosphatase family. The cofactor is Mg(2+). Zn(2+) serves as cofactor.

The protein localises to the periplasm. The catalysed reaction is a phosphate monoester + H2O = an alcohol + phosphate. This Zymomonas mobilis subsp. mobilis (strain ATCC 31821 / ZM4 / CP4) protein is Acid phosphatase (phoC).